The chain runs to 439 residues: sn-glycerol-3-phosphate-binding periplasmic protein UgpB (439 aa).

The signal sequence occupies residues 1–25 (MFNNSIHKVSICIALTLTFSANAMA). Sn-glycerol 3-phosphate-binding residues include tyrosine 67, glutamate 91, serine 146, serine 272, glycine 309, tyrosine 348, and arginine 399.

It belongs to the bacterial solute-binding protein 1 family. In terms of assembly, the complex is composed of two ATP-binding proteins (UgpC), two transmembrane proteins (UgpA and UgpE) and a solute-binding protein (UgpB).

The protein resides in the periplasm. Functionally, part of the ABC transporter complex UgpBAEC involved in sn-glycerol-3-phosphate (G3P) import. Binds G3P. The sequence is that of sn-glycerol-3-phosphate-binding periplasmic protein UgpB (ugpB) from Yersinia pseudotuberculosis serotype I (strain IP32953).